Here is an 831-residue protein sequence, read N- to C-terminus: MutS protein homolog 5 (831 aa).

Residues 1 to 43 form a disordered region; it reads MAFRATPGRTPPGPGPGVPSASFSSPQPAMAAPGGIEEEDEEE. 589-596 serves as a coordination point for ATP; that stretch reads GPNSSGKS.

It belongs to the DNA mismatch repair MutS family. In terms of assembly, heterooligomer of MSH4 and MSH5. Interacts with HJURP. Interacts with C7h12orf40/REDIC1.

In terms of biological role, involved in DNA mismatch repair and meiotic recombination processes. Facilitates crossovers between homologs during meiosis. The chain is MutS protein homolog 5 (Msh5) from Rattus norvegicus (Rat).